The primary structure comprises 479 residues: Probable cytosol aminopeptidase (479 aa).

Positions 251 and 256 each coordinate Mn(2+). K263 is a catalytic residue. Mn(2+)-binding residues include D274, D333, and E335. R337 is an active-site residue.

Belongs to the peptidase M17 family. Mn(2+) is required as a cofactor.

The protein localises to the cytoplasm. It carries out the reaction Release of an N-terminal amino acid, Xaa-|-Yaa-, in which Xaa is preferably Leu, but may be other amino acids including Pro although not Arg or Lys, and Yaa may be Pro. Amino acid amides and methyl esters are also readily hydrolyzed, but rates on arylamides are exceedingly low.. It catalyses the reaction Release of an N-terminal amino acid, preferentially leucine, but not glutamic or aspartic acids.. Its function is as follows. Presumably involved in the processing and regular turnover of intracellular proteins. Catalyzes the removal of unsubstituted N-terminal amino acids from various peptides. The protein is Probable cytosol aminopeptidase of Albidiferax ferrireducens (strain ATCC BAA-621 / DSM 15236 / T118) (Rhodoferax ferrireducens).